A 967-amino-acid chain; its full sequence is Translation initiation factor IF-2 (967 aa).

A disordered region spans residues 34 to 363 (ASSTVEPPVA…APAVGGVSVP (330 aa)). 2 stretches are compositionally biased toward low complexity: residues 51–96 (PAGG…GNAA) and 103–154 (ASEA…TPGP). Over residues 184 to 196 (RSEGGAQRGGPRP) the composition is skewed to gly residues. The span at 197-206 (GGQQRSGKPG) shows a compositional bias: low complexity. Gly residues predominate over residues 300 to 333 (PRRGGGPGGGPGGGGGFRGRGGRGGTQGAFGRGG). Basic residues predominate over residues 334–345 (ARGKHRKSKRAK). In terms of domain architecture, tr-type G spans 460–632 (PRPPVVTVMG…IVLTADGALE (173 aa)). The interval 469-476 (GHVDHGKT) is G1. 469 to 476 (GHVDHGKT) contributes to the GTP binding site. The tract at residues 494-498 (GITQH) is G2. Residues 519 to 522 (DTPG) are G3. GTP contacts are provided by residues 519 to 523 (DTPGH) and 573 to 576 (NKVD). Residues 573 to 576 (NKVD) form a G4 region. Residues 609-611 (SAR) are G5.

The protein belongs to the TRAFAC class translation factor GTPase superfamily. Classic translation factor GTPase family. IF-2 subfamily.

It is found in the cytoplasm. Functionally, one of the essential components for the initiation of protein synthesis. Protects formylmethionyl-tRNA from spontaneous hydrolysis and promotes its binding to the 30S ribosomal subunits. Also involved in the hydrolysis of GTP during the formation of the 70S ribosomal complex. This chain is Translation initiation factor IF-2, found in Kocuria rhizophila (strain ATCC 9341 / DSM 348 / NBRC 103217 / DC2201).